Reading from the N-terminus, the 144-residue chain is MSAKKSTKDSKEQNTPLGGLVLAETPITFNENKPVTKVKVRNTGDRPIQVGSHFHFFEVNRALEFDRAAAYGKRLNISSTTAIRFEPGDETEVPLIPFGGKQTLYGFNNLVDGWTGEGVVPNSERPDKLAAIRLAAERGFKSSK.

The protein belongs to the urease beta subunit family. As to quaternary structure, heterotrimer of UreA (gamma), UreB (beta) and UreC (alpha) subunits. Three heterotrimers associate to form the active enzyme.

Its subcellular location is the cytoplasm. The catalysed reaction is urea + 2 H2O + H(+) = hydrogencarbonate + 2 NH4(+). The protein operates within nitrogen metabolism; urea degradation; CO(2) and NH(3) from urea (urease route): step 1/1. This Yersinia pseudotuberculosis serotype O:1b (strain IP 31758) protein is Urease subunit beta.